Reading from the N-terminus, the 443-residue chain is Cyclic AMP receptor 4 (443 aa).

Residues 1-11 (MKVLQEINLTY) are Extracellular-facing. A glycan (N-linked (GlcNAc...) asparagine) is linked at N8. Residues 12 to 32 (SILVIADFSSIFGCLLVLIAF) traverse the membrane as a helical segment. Residues 33–44 (KKLKLLRNHITR) lie on the Cytoplasmic side of the membrane. A helical membrane pass occupies residues 45-65 (VIACFCVSSLLKDIISTGLTL). The Extracellular portion of the chain corresponds to 66-89 (SLGPQNEAGSTSFQCYLYAITITY). The chain crosses the membrane as a helical span at residues 90–110 (GSLACWLWTLCLAFSIYNLIV). Residues 111-119 (KREPEPEKY) lie on the Cytoplasmic side of the membrane. A helical membrane pass occupies residues 120-140 (EKFYHGVCWTIPLICVIVMLA). Residues 141–161 (KKTIEPVGNWCWISEKYVGYR) are Extracellular-facing. Residues 162–182 (FGLFYGPFFAIWIISAVLVGL) traverse the membrane as a helical segment. At 183–208 (TSRYTYSVIRNSVSDNKDKHMTYQFK) the chain is on the cytoplasmic side. A helical transmembrane segment spans residues 209-229 (LINYIIVFLLCWVFAIVNRIL). The Extracellular portion of the chain corresponds to 230–263 (NGLGYYPTLPNILHTYFSVSHGFFASVTFIYNNP). The chain crosses the membrane as a helical span at residues 264–284 (LMWRYWGSKIFLIFAKFGYFV). At 285–443 (ELQRRLDRNK…DEREKKDNKF (159 aa)) the chain is on the cytoplasmic side. Disordered stretches follow at residues 325–354 (NDISNDNQQQQQQQQTPQQPQQQFQQQQSP) and 396–443 (SFEI…DNKF). Over residues 332 to 352 (QQQQQQQQTPQQPQQQFQQQQ) the composition is skewed to low complexity. A compositionally biased stretch (polar residues) spans 396–410 (SFEITQPSNDLNTIE). The span at 411–425 (NNNNYNNNNNNNNNN) shows a compositional bias: low complexity. The span at 429–443 (IEKEKDEREKKDNKF) shows a compositional bias: basic and acidic residues.

It belongs to the G-protein coupled receptor 5 family. In terms of processing, C-terminal Ser or Thr residues may be phosphorylated.

The protein resides in the membrane. Functionally, receptor for cAMP. Regulates axial patterning and cellular differentiation during late development. The activity of this receptor is mediated by G proteins. The sequence is that of Cyclic AMP receptor 4 (carD) from Dictyostelium discoideum (Social amoeba).